The sequence spans 138 residues: Transcription antitermination protein NusB (138 aa).

The protein belongs to the NusB family.

Its function is as follows. Involved in transcription antitermination. Required for transcription of ribosomal RNA (rRNA) genes. Binds specifically to the boxA antiterminator sequence of the ribosomal RNA (rrn) operons. This Leptospira interrogans serogroup Icterohaemorrhagiae serovar copenhageni (strain Fiocruz L1-130) protein is Transcription antitermination protein NusB.